The following is a 177-amino-acid chain: Large ribosomal subunit protein uL10 (177 aa).

This sequence belongs to the universal ribosomal protein uL10 family. As to quaternary structure, part of the ribosomal stalk of the 50S ribosomal subunit. The N-terminus interacts with L11 and the large rRNA to form the base of the stalk. The C-terminus forms an elongated spine to which L12 dimers bind in a sequential fashion forming a multimeric L10(L12)X complex.

Its function is as follows. Forms part of the ribosomal stalk, playing a central role in the interaction of the ribosome with GTP-bound translation factors. This Xanthomonas axonopodis pv. citri (strain 306) protein is Large ribosomal subunit protein uL10.